The sequence spans 125 residues: Small ribosomal subunit protein uS12 (125 aa).

Residues 1-31 form a disordered region; it reads MPTINQLVRQGREVETTKSKSPAMQNSPQRR. Positions 19 to 29 are enriched in polar residues; that stretch reads SKSPAMQNSPQ. Position 89 is a 3-methylthioaspartic acid (Asp-89).

The protein belongs to the universal ribosomal protein uS12 family. As to quaternary structure, part of the 30S ribosomal subunit. Contacts proteins S8 and S17. May interact with IF1 in the 30S initiation complex.

Functionally, with S4 and S5 plays an important role in translational accuracy. In terms of biological role, interacts with and stabilizes bases of the 16S rRNA that are involved in tRNA selection in the A site and with the mRNA backbone. Located at the interface of the 30S and 50S subunits, it traverses the body of the 30S subunit contacting proteins on the other side and probably holding the rRNA structure together. The combined cluster of proteins S8, S12 and S17 appears to hold together the shoulder and platform of the 30S subunit. The polypeptide is Small ribosomal subunit protein uS12 (Paracidovorax citrulli (strain AAC00-1) (Acidovorax citrulli)).